The chain runs to 627 residues: (-)-alpha-pinene synthase 2, chloroplastic (627 aa).

Residues 1 to 36 (MALVSIAPLASKSCLHKSLSSSAHELKTICRTIPTL) constitute a chloroplast transit peptide. The Mg(2+) site is built by Asp-378, Asp-382, and Asp-530. Residues 378-382 (DDMYD) carry the DDXXD motif motif.

This sequence belongs to the terpene synthase family. Tpsd subfamily. Requires Mg(2+) as cofactor. Mn(2+) is required as a cofactor.

Its subcellular location is the plastid. It is found in the chloroplast. The enzyme catalyses (2E)-geranyl diphosphate = (1S,5S)-beta-pinene + diphosphate. It catalyses the reaction (2E)-geranyl diphosphate = (1S,5S)-alpha-pinene + diphosphate. It functions in the pathway terpene metabolism; oleoresin biosynthesis. In terms of biological role, terpene synthase (TPS) involved in the biosynthesis of monoterpene natural products included in conifer oleoresin secretions and volatile emissions; these compounds contribute to biotic and abiotic stress defense against herbivores and pathogens. Catalyzes the conversion of (2E)-geranyl diphosphate (GPP) to (1S,5S)-beta-pinene. The sequence is that of (-)-alpha-pinene synthase 2, chloroplastic from Picea glauca (White spruce).